Reading from the N-terminus, the 381-residue chain is E3 ubiquitin-protein ligase RNF13 (381 aa).

The N-terminal stretch at 1 to 34 (MLLSIGMLMLSATQVYTILTVQLFAFLNLLPVEA) is a signal peptide. The Lumenal portion of the chain corresponds to 35–182 (DILAYNFENA…VPELSLPLEY (148 aa)). The region spanning 64 to 160 (LKGFLINSKP…GESSANSLKD (97 aa)) is the PA domain. N88 is a glycosylation site (N-linked (GlcNAc...) asparagine). The helical transmembrane segment at 183–203 (YLIPFLIIVGICLILIVIFMI) threads the bilayer. At 204–381 (TKFVQDRHRN…EQDYNIANTV (178 aa)) the chain is on the cytoplasmic side. The segment at 240-282 (CAICLEEYEDGDKLRILPCSHAYHCKCVDPWLTKTKKTCPVCK) adopts an RING-type; atypical zinc-finger fold. The segment at 285-381 (VVPSQGDSDS…EQDYNIANTV (97 aa)) is disordered. Residues 317-328 (SARTQSFGSLSE) are compositionally biased toward polar residues. The span at 339 to 357 (SDYEDDDNEETDSSDADNE) shows a compositional bias: acidic residues. Polar residues predominate over residues 365 to 381 (VQLQPNGEQDYNIANTV).

As to quaternary structure, interacts with ERN1. Post-translationally, autoubiquitinated. In terms of processing, N-glycosylated and also modified with chondroitin sulfate. Expressed in the brain, heart, kidney, liver and spleen. Higher expression in adult tissues compared to the embryonic counterparts.

Its subcellular location is the endoplasmic reticulum membrane. It localises to the late endosome membrane. The protein resides in the lysosome membrane. It is found in the nucleus inner membrane. The enzyme catalyses S-ubiquitinyl-[E2 ubiquitin-conjugating enzyme]-L-cysteine + [acceptor protein]-L-lysine = [E2 ubiquitin-conjugating enzyme]-L-cysteine + N(6)-ubiquitinyl-[acceptor protein]-L-lysine.. It participates in protein modification; protein ubiquitination. Functionally, E3 ubiquitin-protein ligase that regulates cell proliferation. Involved in apoptosis regulation. Mediates ER stress-induced activation of JNK signaling pathway and apoptosis by promoting ERN1 activation and splicing of XBP1 mRNA. Also involved in protein trafficking and localization. The protein is E3 ubiquitin-protein ligase RNF13 (Rnf13) of Mus musculus (Mouse).